A 162-amino-acid chain; its full sequence is Caveolin-2 (162 aa).

Residues 1-86 are Cytoplasmic-facing; that stretch reads MGLETEKADV…FEISKYVIYK (86 aa). Residue Tyr19 is modified to Phosphotyrosine; by SRC. Phosphoserine occurs at positions 20 and 23. A Phosphotyrosine; by SRC modification is found at Tyr27. Residue Ser36 is modified to Phosphoserine. The segment at residues 87 to 107 is an intramembrane region (helical); that stretch reads FLTVFLAIPLAFIAGILFATL. Residues 108–162 lie on the Cytoplasmic side of the membrane; the sequence is SCLHIWILMPFVKTCLMVLPSVQTIWKSVTDVVIGPLCTSVGRIFSSVSMQLSHD.

This sequence belongs to the caveolin family. As to quaternary structure, monomer or homodimer. Interacts with CAV1; the interaction forms a stable heterooligomeric complex that is required for targeting to lipid rafts and for caveolae formation. Tyrosine phosphorylated forms do not form heterooligomers with the Tyr-19-phosphorylated form existing as a monomer or dimer and the Tyr-27-form as a monomer only. Interacts (tyrosine phosphorylated form) with the SH2 domain-containing proteins, RASA1, NCK1 and SRC. Interacts (tyrosine phosphorylated form) with INSR; the interaction (Tyr-27-phosphorylated form) is increased on insulin stimulation. Interacts (Tyr-19-phosphorylated form) with MAPK1 (phosphorylated form); the interaction, promoted by insulin, leads to nuclear location and MAPK1 activation. Interacts with STAT3; the interaction is increased on insulin-induced tyrosine phosphorylation leading to STAT activation. Post-translationally, phosphorylated on serine and tyrosine residues. CAV1 promotes phosphorylation on Ser-23 which targets the complex to the plasma membrane, lipid rafts and caveolae. Phosphorylation on Ser-36 appears to modulate mitosis in endothelial cells. Phosphorylation on both Tyr-19 and Tyr-27 is required for insulin-induced 'Ser-727' phosphorylation of STAT3 and its activation. Phosphorylation on Tyr-19 is required for insulin-induced phosphorylation of MAPK1 and DNA binding of STAT3. Tyrosine phosphorylation is induced by both EGF and insulin. In terms of tissue distribution, in the retina, mainly expressed in vessels, but also diffuse expression in the inner and outer plexiform layers and in the inner nuclear layer.

Its subcellular location is the nucleus. It is found in the cytoplasm. The protein resides in the golgi apparatus membrane. It localises to the cell membrane. The protein localises to the membrane. Its subcellular location is the caveola. Functionally, may act as a scaffolding protein within caveolar membranes. Interacts directly with G-protein alpha subunits and can functionally regulate their activity. Acts as an accessory protein in conjunction with CAV1 in targeting to lipid rafts and driving caveolae formation. The Ser-36 phosphorylated form has a role in modulating mitosis in endothelial cells. Positive regulator of cellular mitogenesis of the MAPK signaling pathway. Required for the insulin-stimulated nuclear translocation and activation of MAPK1 and STAT3, and the subsequent regulation of cell cycle progression. The sequence is that of Caveolin-2 (Cav2) from Rattus norvegicus (Rat).